A 98-amino-acid polypeptide reads, in one-letter code: uncharacterized protein (98 aa).

This is an uncharacterized protein from Rickettsia conorii (strain ATCC VR-613 / Malish 7).